Reading from the N-terminus, the 435-residue chain is DMATS-type prenyltransferase fscG (435 aa).

Dimethylallyl diphosphate contacts are provided by Arg111, Lys193, Tyr195, Arg259, Lys261, Tyr263, Tyr352, and Tyr423.

It belongs to the tryptophan dimethylallyltransferase family.

It functions in the pathway secondary metabolite biosynthesis. DMATS-type prenyltransferase; part of the fragmented gene cluster that mediates the biosynthesis of fusarochromene, a tryptophan-derived metabolite closely related to a group of mycotoxins including fusarochromanone. Within the pathway, fscG catalyzes the prenylation of the primary alcohol produced by fscA which is necessary for the formation of the chromene ring by the oxidoreductase fscI. The first step of the pathway is the epimerization of L-tryptophan to D-tryptophan in the presence of the NRPS-like tryptophan epimerase fscC. D-tryptophan is subsequently hydroxylated by the tryptophan 6-hydroxylase fscE to yield 6-hydroxytryptophan. The pyrrole ring undergoes cleavaged by the tryptophan 2,3-dioxygenase fscD and is finally converted to 4-hydroxykyrunenine by the hydrolase fscH. The NRPS-like oxidoreductase fscA reduces the carboxyl group to primary alcohol and the DMATS-type prenyltransferase fscG performs prenylation, followed by the formation of a chromene ring catalyzed by the oxidoreductase fscI, which leads to desacetylfusarochromene. Epoxidation by fscF and rearrangement reactions of chromene double bonds convert compound desacetylfusarochromene to fusarochromanones. Although specific acetyltransferases were not found near the fsc gene cluster, several predicted enzymes containing the N-acetyltransferase superfamily domain are present in the genome of F.equiseti. These predicted enzymes may have the potential to convert desacetylfusarochromene to fusarochromene. This is DMATS-type prenyltransferase fscG from Fusarium equiseti (Fusarium scirpi).